A 99-amino-acid chain; its full sequence is DNA-directed RNA polymerase subunit omega (99 aa).

Belongs to the RNA polymerase subunit omega family. The RNAP catalytic core consists of 2 alpha, 1 beta, 1 beta' and 1 omega subunit. When a sigma factor is associated with the core the holoenzyme is formed, which can initiate transcription.

It carries out the reaction RNA(n) + a ribonucleoside 5'-triphosphate = RNA(n+1) + diphosphate. Functionally, promotes RNA polymerase assembly. Latches the N- and C-terminal regions of the beta' subunit thereby facilitating its interaction with the beta and alpha subunits. In Thermus thermophilus (strain ATCC BAA-163 / DSM 7039 / HB27), this protein is DNA-directed RNA polymerase subunit omega.